Reading from the N-terminus, the 368-residue chain is DNA replication and repair protein RecF (368 aa).

30–37 (GNNAQGKT) lines the ATP pocket.

This sequence belongs to the RecF family.

The protein localises to the cytoplasm. The RecF protein is involved in DNA metabolism; it is required for DNA replication and normal SOS inducibility. RecF binds preferentially to single-stranded, linear DNA. It also seems to bind ATP. The chain is DNA replication and repair protein RecF from Streptococcus pyogenes serotype M5 (strain Manfredo).